We begin with the raw amino-acid sequence, 141 residues long: Hemoglobin subunit alpha-D (141 aa).

Positions 1–141 (MLNAEDKKLI…VSAVLAEKYR (141 aa)) constitute a Globin domain. Positions 58 and 87 each coordinate heme b.

This sequence belongs to the globin family. As to quaternary structure, heterotetramer of two alpha-D chains and two beta chains. Red blood cells.

Its function is as follows. Involved in oxygen transport from the lung to the various peripheral tissues. This chain is Hemoglobin subunit alpha-D (HBAD), found in Phasianus colchicus colchicus (Black-necked pheasant).